A 21-amino-acid polypeptide reads, in one-letter code: Protein IroK (21 aa).

Its function is as follows. Possible increased expression of this protein (due to mutations upstream of the start codon) is proposed to be responsible for resistance to 3-hydroxypropionic acid (3-HP). The sequence is that of Protein IroK (iroK) from Escherichia coli (strain K12).